Reading from the N-terminus, the 397-residue chain is Tryptophan synthase beta chain (397 aa).

Position 87 is an N6-(pyridoxal phosphate)lysine (K87).

It belongs to the TrpB family. Tetramer of two alpha and two beta chains. Pyridoxal 5'-phosphate is required as a cofactor.

It catalyses the reaction (1S,2R)-1-C-(indol-3-yl)glycerol 3-phosphate + L-serine = D-glyceraldehyde 3-phosphate + L-tryptophan + H2O. It participates in amino-acid biosynthesis; L-tryptophan biosynthesis; L-tryptophan from chorismate: step 5/5. The beta subunit is responsible for the synthesis of L-tryptophan from indole and L-serine. The chain is Tryptophan synthase beta chain from Klebsiella pneumoniae (strain 342).